Here is a 252-residue protein sequence, read N- to C-terminus: Large ribosomal subunit protein uL4 (252 aa).

This sequence belongs to the universal ribosomal protein uL4 family. Part of the 50S ribosomal subunit.

Functionally, one of the primary rRNA binding proteins, this protein initially binds near the 5'-end of the 23S rRNA. It is important during the early stages of 50S assembly. It makes multiple contacts with different domains of the 23S rRNA in the assembled 50S subunit and ribosome. In terms of biological role, forms part of the polypeptide exit tunnel. This Archaeoglobus fulgidus (strain ATCC 49558 / DSM 4304 / JCM 9628 / NBRC 100126 / VC-16) protein is Large ribosomal subunit protein uL4.